The primary structure comprises 207 residues: Holliday junction branch migration complex subunit RuvA (207 aa).

The segment at 1–64 (MISYIKGELA…EDECSLFGFL (64 aa)) is domain I. A domain II region spans residues 65–143 (TRDDLSMFKM…LDEVFESALS (79 aa)). Positions 144 to 155 (KNKKADNNSNVS) are flexible linker. A domain III region spans residues 156–207 (NVMMIRNDAVEALVSLGYSSKDALVAVKEVEDIENKDSETVLKEALKKLVKF).

This sequence belongs to the RuvA family. Homotetramer. Forms an RuvA(8)-RuvB(12)-Holliday junction (HJ) complex. HJ DNA is sandwiched between 2 RuvA tetramers; dsDNA enters through RuvA and exits via RuvB. An RuvB hexamer assembles on each DNA strand where it exits the tetramer. Each RuvB hexamer is contacted by two RuvA subunits (via domain III) on 2 adjacent RuvB subunits; this complex drives branch migration. In the full resolvosome a probable DNA-RuvA(4)-RuvB(12)-RuvC(2) complex forms which resolves the HJ.

It is found in the cytoplasm. The RuvA-RuvB-RuvC complex processes Holliday junction (HJ) DNA during genetic recombination and DNA repair, while the RuvA-RuvB complex plays an important role in the rescue of blocked DNA replication forks via replication fork reversal (RFR). RuvA specifically binds to HJ cruciform DNA, conferring on it an open structure. The RuvB hexamer acts as an ATP-dependent pump, pulling dsDNA into and through the RuvAB complex. HJ branch migration allows RuvC to scan DNA until it finds its consensus sequence, where it cleaves and resolves the cruciform DNA. This chain is Holliday junction branch migration complex subunit RuvA, found in Lachnospira eligens (strain ATCC 27750 / DSM 3376 / VPI C15-48 / C15-B4) (Eubacterium eligens).